A 436-amino-acid chain; its full sequence is MTSTLHSTSFNTTRSKQVFARAQSLMPGGVSSPVRAFKSVGGDPVVFDRVSGAYAWDVDGNQYIDYIGSWGPAIVGHAHPEVIEALRRALEKGTSFGAPCVLENELAERVIEAVPSVEMVRFVNSGTEACMAVLRLMRAYTGREKVIKFEGCYHGHADMFLVKAGSGVATLGLPDSPGVPKAATSATLTAPYNDLEAVKALFEQHPDSIAGVILEPVVGNAGFIPPQPGFLEGLRDLTQKYGALLVFDEVMTGFRISYGGVQAKFGVIPDLTTLGKVIGGGLPVGAYGGRREIMEMVAPAGPMYQAGTLSGNPLAMTAGIQTLDILRRPGTYEYLERITEKLATGLLQIARETGHEMCGGYLPGMFGFFFTAGPVRNYEEAKTSDLQKFARFHRGMLERGVYLAPSQFEAGFTSLAHTEADVEKTLAAAREVLSTL.

N6-(pyridoxal phosphate)lysine is present on lysine 276.

It belongs to the class-III pyridoxal-phosphate-dependent aminotransferase family. HemL subfamily. Homodimer. Pyridoxal 5'-phosphate serves as cofactor.

The protein localises to the cytoplasm. It catalyses the reaction (S)-4-amino-5-oxopentanoate = 5-aminolevulinate. The protein operates within porphyrin-containing compound metabolism; protoporphyrin-IX biosynthesis; 5-aminolevulinate from L-glutamyl-tRNA(Glu): step 2/2. It participates in porphyrin-containing compound metabolism; chlorophyll biosynthesis. The chain is Glutamate-1-semialdehyde 2,1-aminomutase from Synechococcus sp. (strain JA-2-3B'a(2-13)) (Cyanobacteria bacterium Yellowstone B-Prime).